A 257-amino-acid chain; its full sequence is Pyrroline-5-carboxylate reductase (257 aa).

It belongs to the pyrroline-5-carboxylate reductase family.

Its subcellular location is the cytoplasm. It catalyses the reaction L-proline + NADP(+) = (S)-1-pyrroline-5-carboxylate + NADPH + 2 H(+). The catalysed reaction is L-proline + NAD(+) = (S)-1-pyrroline-5-carboxylate + NADH + 2 H(+). Its pathway is amino-acid biosynthesis; L-proline biosynthesis; L-proline from L-glutamate 5-semialdehyde: step 1/1. Its function is as follows. Catalyzes the reduction of 1-pyrroline-5-carboxylate (PCA) to L-proline. This Helicobacter pylori (strain J99 / ATCC 700824) (Campylobacter pylori J99) protein is Pyrroline-5-carboxylate reductase.